Reading from the N-terminus, the 375-residue chain is Succinyl-diaminopimelate desuccinylase (375 aa).

Residue histidine 66 participates in Zn(2+) binding. Aspartate 68 is an active-site residue. Aspartate 99 lines the Zn(2+) pocket. Glutamate 133 acts as the Proton acceptor in catalysis. Zn(2+)-binding residues include glutamate 134, glutamate 162, and histidine 348.

This sequence belongs to the peptidase M20A family. DapE subfamily. Homodimer. Zn(2+) serves as cofactor. It depends on Co(2+) as a cofactor.

The enzyme catalyses N-succinyl-(2S,6S)-2,6-diaminopimelate + H2O = (2S,6S)-2,6-diaminopimelate + succinate. Its pathway is amino-acid biosynthesis; L-lysine biosynthesis via DAP pathway; LL-2,6-diaminopimelate from (S)-tetrahydrodipicolinate (succinylase route): step 3/3. In terms of biological role, catalyzes the hydrolysis of N-succinyl-L,L-diaminopimelic acid (SDAP), forming succinate and LL-2,6-diaminopimelate (DAP), an intermediate involved in the bacterial biosynthesis of lysine and meso-diaminopimelic acid, an essential component of bacterial cell walls. The sequence is that of Succinyl-diaminopimelate desuccinylase from Klebsiella pneumoniae (strain 342).